A 141-amino-acid polypeptide reads, in one-letter code: Hemoglobin subunit alpha (141 aa).

The region spanning 1–141 (VLSPADKTNV…VSTVLTSKYR (141 aa)) is the Globin domain. Ser3 carries the phosphoserine modification. Position 7 is an N6-succinyllysine (Lys7). Thr8 bears the Phosphothreonine mark. An N6-succinyllysine modification is found at Lys11. N6-acetyllysine; alternate is present on Lys16. At Lys16 the chain carries N6-succinyllysine; alternate. At Tyr24 the chain carries Phosphotyrosine. Ser35 is subject to Phosphoserine. An N6-succinyllysine modification is found at Lys40. At Ser49 the chain carries Phosphoserine. His58 provides a ligand contact to O2. His87 provides a ligand contact to heme b. Ser102 carries the post-translational modification Phosphoserine. A Phosphothreonine modification is found at Thr108. Phosphoserine is present on Ser124. Residues Thr134 and Thr137 each carry the phosphothreonine modification. Ser138 carries the phosphoserine modification.

Belongs to the globin family. As to quaternary structure, heterotetramer of two alpha chains and two beta chains. As to expression, red blood cells.

Functionally, involved in oxygen transport from the lung to the various peripheral tissues. In terms of biological role, hemopressin acts as an antagonist peptide of the cannabinoid receptor CNR1. Hemopressin-binding efficiently blocks cannabinoid receptor CNR1 and subsequent signaling. The sequence is that of Hemoglobin subunit alpha (HBA) from Lutra lutra (European river otter).